A 394-amino-acid chain; its full sequence is 1-deoxy-D-xylulose 5-phosphate reductoisomerase (394 aa).

6 residues coordinate NADPH: threonine 6, glycine 7, serine 8, isoleucine 9, alanine 32, and asparagine 124. Lysine 125 serves as a coordination point for 1-deoxy-D-xylulose 5-phosphate. Glutamate 126 serves as a coordination point for NADPH. Residue aspartate 148 coordinates Mn(2+). Positions 149, 150, 174, and 197 each coordinate 1-deoxy-D-xylulose 5-phosphate. Glutamate 150 is a Mn(2+) binding site. Glycine 203 serves as a coordination point for NADPH. Residues serine 210, asparagine 215, lysine 216, and glutamate 219 each coordinate 1-deoxy-D-xylulose 5-phosphate. Glutamate 219 provides a ligand contact to Mn(2+).

This sequence belongs to the DXR family. The cofactor is Mg(2+). Mn(2+) serves as cofactor.

It carries out the reaction 2-C-methyl-D-erythritol 4-phosphate + NADP(+) = 1-deoxy-D-xylulose 5-phosphate + NADPH + H(+). The protein operates within isoprenoid biosynthesis; isopentenyl diphosphate biosynthesis via DXP pathway; isopentenyl diphosphate from 1-deoxy-D-xylulose 5-phosphate: step 1/6. Its function is as follows. Catalyzes the NADPH-dependent rearrangement and reduction of 1-deoxy-D-xylulose-5-phosphate (DXP) to 2-C-methyl-D-erythritol 4-phosphate (MEP). This is 1-deoxy-D-xylulose 5-phosphate reductoisomerase from Streptomyces avermitilis (strain ATCC 31267 / DSM 46492 / JCM 5070 / NBRC 14893 / NCIMB 12804 / NRRL 8165 / MA-4680).